We begin with the raw amino-acid sequence, 431 residues long: NADH-quinone oxidoreductase chain 1 (431 aa).

NAD(+) is bound at residue 54–63 (GRGGAGFPTG). 167–214 (GAGAYICGEETALLESLEGKKGMPRMKPPFPAGAGLYGCPTTVNNVES) lines the FMN pocket. Positions 346, 349, 352, and 392 each coordinate [4Fe-4S] cluster.

This sequence belongs to the complex I 51 kDa subunit family. In terms of assembly, NDH-1 is composed of at least 14 different subunits, Nqo1 to Nqo14. The complex has a L-shaped structure, with the hydrophobic arm (subunits Nqo7, Nqo8, Nqo10 to Nqo14) embedded in the inner membrane and the hydrophilic peripheral arm (subunits Nqo1 to Nqo6, Nqo9) protruding into the bacterial cytoplasm. The hydrophilic domain contains all the redox centers. The cofactor is FMN. It depends on [4Fe-4S] cluster as a cofactor.

Its subcellular location is the cell inner membrane. It catalyses the reaction a quinone + NADH + 5 H(+)(in) = a quinol + NAD(+) + 4 H(+)(out). Functionally, NDH-1 shuttles electrons from NADH, via FMN and iron-sulfur (Fe-S) centers, to quinones in the respiratory chain. The immediate electron acceptor for the enzyme in this species is believed to be ubiquinone. Couples the redox reaction to proton translocation (for every two electrons transferred, four hydrogen ions are translocated across the cytoplasmic membrane), and thus conserves the redox energy in a proton gradient. This is NADH-quinone oxidoreductase chain 1 (nqo1) from Paracoccus denitrificans.